A 266-amino-acid chain; its full sequence is L-aspartate dehydrogenase (266 aa).

NAD(+) contacts are provided by A123 and N189. H219 is a catalytic residue.

Belongs to the L-aspartate dehydrogenase family.

The enzyme catalyses L-aspartate + NADP(+) + H2O = oxaloacetate + NH4(+) + NADPH + H(+). It catalyses the reaction L-aspartate + NAD(+) + H2O = oxaloacetate + NH4(+) + NADH + H(+). It participates in cofactor biosynthesis; NAD(+) biosynthesis; iminoaspartate from L-aspartate (dehydrogenase route): step 1/1. Specifically catalyzes the NAD or NADP-dependent dehydrogenation of L-aspartate to iminoaspartate. In Cupriavidus taiwanensis (strain DSM 17343 / BCRC 17206 / CCUG 44338 / CIP 107171 / LMG 19424 / R1) (Ralstonia taiwanensis (strain LMG 19424)), this protein is L-aspartate dehydrogenase.